Here is a 433-residue protein sequence, read N- to C-terminus: UDP-N-acetylglucosamine 1-carboxyvinyltransferase (433 aa).

Residue 22 to 23 participates in phosphoenolpyruvate binding; it reads KN. A UDP-N-acetyl-alpha-D-glucosamine-binding site is contributed by Arg-96. Cys-120 serves as the catalytic Proton donor. Position 120 is a 2-(S-cysteinyl)pyruvic acid O-phosphothioketal (Cys-120). UDP-N-acetyl-alpha-D-glucosamine-binding positions include 125-129, Asp-308, and Ile-330; that span reads RPIDL.

The protein belongs to the EPSP synthase family. MurA subfamily.

The protein localises to the cytoplasm. It catalyses the reaction phosphoenolpyruvate + UDP-N-acetyl-alpha-D-glucosamine = UDP-N-acetyl-3-O-(1-carboxyvinyl)-alpha-D-glucosamine + phosphate. The protein operates within cell wall biogenesis; peptidoglycan biosynthesis. Cell wall formation. Adds enolpyruvyl to UDP-N-acetylglucosamine. In Koribacter versatilis (strain Ellin345), this protein is UDP-N-acetylglucosamine 1-carboxyvinyltransferase.